A 231-amino-acid chain; its full sequence is NADH-ubiquinone oxidoreductase chain 4 (231 aa).

The next 6 helical transmembrane spans lie at Pro-1–Ile-21, Met-34–Leu-54, Ile-63–Gly-85, Ala-89–Tyr-111, Ile-128–Pro-148, and Leu-156–Ser-176.

This sequence belongs to the complex I subunit 4 family.

The protein localises to the mitochondrion membrane. The enzyme catalyses a ubiquinone + NADH + 5 H(+)(in) = a ubiquinol + NAD(+) + 4 H(+)(out). In terms of biological role, core subunit of the mitochondrial membrane respiratory chain NADH dehydrogenase (Complex I) that is believed to belong to the minimal assembly required for catalysis. Complex I functions in the transfer of electrons from NADH to the respiratory chain. The immediate electron acceptor for the enzyme is believed to be ubiquinone. This Bothriechis lateralis (Side-striped palm pitviper) protein is NADH-ubiquinone oxidoreductase chain 4 (MT-ND4).